The sequence spans 784 residues: Kinesin-like protein 6 (784 aa).

One can recognise a Kinesin motor domain in the interval 6–389; it reads SISVAVRVRP…LKYGNRAKNI (384 aa). 134-141 is a binding site for ATP; the sequence is GATGCGKT. 2 coiled-coil regions span residues 405–440 and 463–483; these read SEYV…EVRK and RDLQ…EDEI. A disordered region spans residues 677 to 715; it reads SEVPTTSSVPPVEIKNKDSKPKVEKSLDKHNMNNDRSFL. Over residues 690-709 the composition is skewed to basic and acidic residues; it reads IKNKDSKPKVEKSLDKHNMN.

This sequence belongs to the TRAFAC class myosin-kinesin ATPase superfamily. Kinesin family. Kinesin II subfamily. As to quaternary structure, heterodimer with klp5.

The protein resides in the cytoplasm. Its subcellular location is the cytoskeleton. The protein localises to the chromosome. It is found in the centromere. It localises to the kinetochore. The protein resides in the spindle. Its function is as follows. Has a role in establishing metaphase during mitosis. Required for chromosome segregation where it generates tension during kinetochore capturing. The chain is Kinesin-like protein 6 (klp6) from Schizosaccharomyces pombe (strain 972 / ATCC 24843) (Fission yeast).